The following is a 457-amino-acid chain: Siroheme synthase (457 aa).

The segment at 1 to 204 (MDHLPIFCQL…NDQKAITETT (204 aa)) is precorrin-2 dehydrogenase /sirohydrochlorin ferrochelatase. NAD(+) is bound by residues 22–23 (DV) and 43–44 (LA). A Phosphoserine modification is found at Ser-128. The interval 216–457 (GEVVLVGAGP…RDKLNWFSNH (242 aa)) is uroporphyrinogen-III C-methyltransferase. Residue Pro-225 participates in S-adenosyl-L-methionine binding. Residue Asp-248 is the Proton acceptor of the active site. Lys-270 functions as the Proton donor in the catalytic mechanism. Residues 301-303 (GGD), Ile-306, 331-332 (TA), Met-382, and Gly-411 each bind S-adenosyl-L-methionine.

This sequence in the N-terminal section; belongs to the precorrin-2 dehydrogenase / sirohydrochlorin ferrochelatase family. It in the C-terminal section; belongs to the precorrin methyltransferase family.

The enzyme catalyses uroporphyrinogen III + 2 S-adenosyl-L-methionine = precorrin-2 + 2 S-adenosyl-L-homocysteine + H(+). It catalyses the reaction precorrin-2 + NAD(+) = sirohydrochlorin + NADH + 2 H(+). The catalysed reaction is siroheme + 2 H(+) = sirohydrochlorin + Fe(2+). Its pathway is cofactor biosynthesis; adenosylcobalamin biosynthesis; precorrin-2 from uroporphyrinogen III: step 1/1. It functions in the pathway cofactor biosynthesis; adenosylcobalamin biosynthesis; sirohydrochlorin from precorrin-2: step 1/1. The protein operates within porphyrin-containing compound metabolism; siroheme biosynthesis; precorrin-2 from uroporphyrinogen III: step 1/1. It participates in porphyrin-containing compound metabolism; siroheme biosynthesis; siroheme from sirohydrochlorin: step 1/1. Its pathway is porphyrin-containing compound metabolism; siroheme biosynthesis; sirohydrochlorin from precorrin-2: step 1/1. Its function is as follows. Multifunctional enzyme that catalyzes the SAM-dependent methylations of uroporphyrinogen III at position C-2 and C-7 to form precorrin-2 via precorrin-1. Then it catalyzes the NAD-dependent ring dehydrogenation of precorrin-2 to yield sirohydrochlorin. Finally, it catalyzes the ferrochelation of sirohydrochlorin to yield siroheme. The protein is Siroheme synthase of Escherichia coli O17:K52:H18 (strain UMN026 / ExPEC).